Reading from the N-terminus, the 1019-residue chain is Vacuolar membrane protease (1019 aa).

Residues 1-69 (MFLEINFYST…DRIPTVVGFR (69 aa)) are Cytoplasmic-facing. The helical transmembrane segment at 70 to 90 (VIPTTVLVLLTYLTIFTLVIV) threads the bilayer. The Vacuolar segment spans residues 91 to 404 (TDWLPEPPKN…AELVIFYLND (314 aa)). N-linked (GlcNAc...) asparagine glycosylation is present at Asn158. The Zn(2+) site is built by His195 and Asp207. Glu239 serves as the catalytic Proton acceptor. Glu240 is a Zn(2+) binding site. An N-linked (GlcNAc...) asparagine glycan is attached at Asn256. Residues Glu265 and His341 each coordinate Zn(2+). A helical transmembrane segment spans residues 405 to 425 (LLIYNVVSLVVGPISLIFFVV). Topologically, residues 426-466 (CEYVLRNERARQPNGHPVSRPSVLEWLKQRSWLRALWRRSK) are cytoplasmic. A helical transmembrane segment spans residues 467–487 (FWIALVITIALQALLVWGYLA). Over 488–497 (FNSFTVYSSP) the chain is Vacuolar. A helical membrane pass occupies residues 498–518 (YLVLISFFSLAYLSLVIPLTF). Residues 519–539 (TFNQTQSPTAKYIAPEREKHT) are Cytoplasmic-facing. Residues 540-560 (LLIQVYIFTWILLLFSTIAVA) traverse the membrane as a helical segment. Topologically, residues 561–565 (RAQVG) are vacuolar. The chain crosses the membrane as a helical span at residues 566-586 (GLYFVTAWNTGVWIACLLAAV). Over 587-651 (EGMMLPVPQG…ASLRKPQEGG (65 aa)) the chain is Cytoplasmic. The tract at residues 603–634 (HSAHHHHHHEHEEDQDADDDDREQRQPPTEAT) is disordered. A helical transmembrane segment spans residues 652–672 (VVGWWIVHLLLTIPAPVLLIA). Residues 673-692 (QMGSLLLDSLPQTLADGSPA) lie on the Vacuolar side of the membrane. Residues 693–713 (YVVYAAASLTAVLLAVPLTPF) traverse the membrane as a helical segment. Topologically, residues 714–719 (SGKLHR) are cytoplasmic. A helical membrane pass occupies residues 720-740 (GLFFLFFLSFLIVTAYLWLAF). Over 741 to 1019 (PFSSADPLKV…LVEAWSPFSV (279 aa)) the chain is Vacuolar. Asn774 carries N-linked (GlcNAc...) asparagine glycosylation.

It belongs to the peptidase M28 family. Requires Zn(2+) as cofactor.

Its subcellular location is the vacuole membrane. May be involved in vacuolar sorting and osmoregulation. In Laccaria bicolor (strain S238N-H82 / ATCC MYA-4686) (Bicoloured deceiver), this protein is Vacuolar membrane protease.